Here is a 100-residue protein sequence, read N- to C-terminus: Integration host factor subunit alpha (100 aa).

A disordered region spans residues 53 to 72 (FDLRDKKQRPGRNPKTGEEI).

This sequence belongs to the bacterial histone-like protein family. As to quaternary structure, heterodimer of an alpha and a beta chain.

In terms of biological role, this protein is one of the two subunits of integration host factor, a specific DNA-binding protein that functions in genetic recombination as well as in transcriptional and translational control. This chain is Integration host factor subunit alpha, found in Marinobacter nauticus (strain ATCC 700491 / DSM 11845 / VT8) (Marinobacter aquaeolei).